The sequence spans 249 residues: Metal-staphylopine import system ATP-binding protein CntF (249 aa).

Residues 2-244 enclose the ABC transporter domain; it reads IKVTDVEKSY…DNAYTRELIE (243 aa). Residue 42–49 coordinates ATP; sequence GESGSGKS.

It belongs to the ABC transporter superfamily. The complex is composed of two ATP-binding proteins (CntD and CntF), two transmembrane proteins (CntB and CntC) and a solute-binding protein (CntA).

Its subcellular location is the cell membrane. In terms of biological role, part of the ABC transporter complex CntABCDF (Opp1) involved in the uptake of metal in complex with the metallophore staphylopine (StP). May be involved in the import of a large array of divalent metals ions such as nickel, cobalt, zinc, copper and iron. Probably responsible for energy coupling to the transport system. The polypeptide is Metal-staphylopine import system ATP-binding protein CntF (Staphylococcus aureus (strain Mu50 / ATCC 700699)).